A 73-amino-acid polypeptide reads, in one-letter code: MKFYIVFCLFVVLLINFAAAEETEEPIRHAKKNPSEGECKKACADAFANGDQSKIAKAENFKDYYCNCHIIIH.

An N-terminal signal peptide occupies residues Met1–Ala20. Intrachain disulfides connect Cys39/Cys66 and Cys43/Cys68.

Belongs to the scoloptoxin-15 family. Expressed by the venom gland.

The protein localises to the secreted. Functionally, activity unknown, even that a lot of targets (Kv, Nav, Cav) have been tested and activities on insects and mice have been tested. This Scolopendra morsitans (Tanzanian blue ringleg centipede) protein is U-scoloptoxin(15)-Sm2a.